A 93-amino-acid chain; its full sequence is MFPKRQGIIVWLHSLKHSKHLRKFGNIHYVSKRLKYAVLYCDMEQVDEMMKKLASLPFVKRVEPSYRPFLKLEFESKGEKEKNSSYPLGYSAE.

Belongs to the UPF0298 family.

Its subcellular location is the cytoplasm. The sequence is that of UPF0298 protein GWCH70_0997 from Geobacillus sp. (strain WCH70).